An 884-amino-acid polypeptide reads, in one-letter code: Alanine--tRNA ligase (884 aa).

4 residues coordinate Zn(2+): His568, His572, Cys670, and His674.

This sequence belongs to the class-II aminoacyl-tRNA synthetase family. It depends on Zn(2+) as a cofactor.

It is found in the cytoplasm. It catalyses the reaction tRNA(Ala) + L-alanine + ATP = L-alanyl-tRNA(Ala) + AMP + diphosphate. Catalyzes the attachment of alanine to tRNA(Ala) in a two-step reaction: alanine is first activated by ATP to form Ala-AMP and then transferred to the acceptor end of tRNA(Ala). Also edits incorrectly charged Ser-tRNA(Ala) and Gly-tRNA(Ala) via its editing domain. This Synechococcus sp. (strain JA-2-3B'a(2-13)) (Cyanobacteria bacterium Yellowstone B-Prime) protein is Alanine--tRNA ligase.